Consider the following 570-residue polypeptide: Hydroxylamine reductase (570 aa).

Residues Cys-5, Cys-8, Cys-17, and Cys-23 each contribute to the [4Fe-4S] cluster site. Hybrid [4Fe-2O-2S] cluster-binding residues include His-266, Glu-290, Cys-334, Cys-425, Cys-453, Cys-478, Glu-513, and Lys-515. Cys-425 bears the Cysteine persulfide mark.

Belongs to the HCP family. [4Fe-4S] cluster is required as a cofactor. Hybrid [4Fe-2O-2S] cluster serves as cofactor.

Its subcellular location is the cytoplasm. It catalyses the reaction A + NH4(+) + H2O = hydroxylamine + AH2 + H(+). Functionally, catalyzes the reduction of hydroxylamine to form NH(3) and H(2)O. The chain is Hydroxylamine reductase from Clostridium botulinum (strain Langeland / NCTC 10281 / Type F).